A 349-amino-acid chain; its full sequence is D-alanine--D-alanine ligase (349 aa).

Residues 132–335 enclose the ATP-grasp domain; sequence KHVFEAVGVP…YSDLIEKLVD (204 aa). 162 to 217 contacts ATP; that stretch reads VEKLEFPVFVKPANMGSSVGISKVDDLADLQPALSEAYKYDNRVVIEQGVDAREIE. 3 residues coordinate Mg(2+): Asp-289, Glu-302, and Asn-304.

This sequence belongs to the D-alanine--D-alanine ligase family. It depends on Mg(2+) as a cofactor. Mn(2+) is required as a cofactor.

It is found in the cytoplasm. The enzyme catalyses 2 D-alanine + ATP = D-alanyl-D-alanine + ADP + phosphate + H(+). Its pathway is cell wall biogenesis; peptidoglycan biosynthesis. In terms of biological role, cell wall formation. This is D-alanine--D-alanine ligase from Lactococcus lactis subsp. lactis (strain IL1403) (Streptococcus lactis).